The chain runs to 335 residues: Serine/threonine-protein kinase crk1 (335 aa).

The Protein kinase domain occupies 11 to 292 (YVKERKVGEG…AQQALEHHYF (282 aa)). ATP contacts are provided by residues 17 to 25 (VGEGTYAVV) and lysine 40. Aspartate 133 serves as the catalytic Proton acceptor. Position 162 is a phosphoserine (serine 162). Serine 165 is modified (phosphoserine; by CAK). Residue serine 318 is modified to Phosphoserine.

The protein belongs to the protein kinase superfamily. CMGC Ser/Thr protein kinase family. CDC2/CDKX subfamily. One of the nine subunits forming the core-TFIIH basal transcription factor. Interacts with mcs2 and tfb3.

Its subcellular location is the cytoplasm. The protein localises to the nucleus. The catalysed reaction is [DNA-directed RNA polymerase] + ATP = phospho-[DNA-directed RNA polymerase] + ADP + H(+). In terms of biological role, protein kinase essential for cell proliferation, where it is required for completion of cytokinesis. Phosphorylates the C-terminal repeat domain (CTD) of RNA polymerase II. The polypeptide is Serine/threonine-protein kinase crk1 (crk1) (Schizosaccharomyces pombe (strain 972 / ATCC 24843) (Fission yeast)).